A 365-amino-acid chain; its full sequence is Homeobox protein Nkx-6.1 (365 aa).

A disordered region spans residues 35-136 (LYPAAYPPLP…SSSSASATSA (102 aa)). Low complexity-rich tracts occupy residues 48–59 (PSSSSSSSSSSS), 69–92 (PGGL…QLSA), and 110–136 (ASGA…ATSA). A repressor domain region spans residues 102–269 (LSRPSMPVAS…KYLAGPERAR (168 aa)). Arginine 190 bears the Asymmetric dimethylarginine mark. Positions 237 to 296 (RKHTRPTFSGQQIFALEKTFEQTKYLAGPERARLAYSLGMTESQVKVWFQNRRTKWRKKH) form a DNA-binding region, homeobox. The disordered stretch occupies residues 295–365 (KHAAEMATAK…LHASEAEGSS (71 aa)). Over residues 305–318 (KKQDSETERLKGTS) the composition is skewed to basic and acidic residues. The tract at residues 307 to 365 (QDSETERLKGTSENEEDDDDYNKPLDPNSDDEKITQLLKKHKSSGGSLLLHASEAEGSS) is involved in DNA-binding.

In terms of tissue distribution, pancreatic beta cells.

Its subcellular location is the nucleus. Functionally, transcription factor which binds to specific A/T-rich DNA sequences in the promoter regions of a number of genes. Involved in the development of insulin-producing beta cells in the islets of Langerhans at the secondary transition. Together with NKX2-2 and IRX3 acts to restrict the generation of motor neurons to the appropriate region of the neural tube. Belongs to the class II proteins of neuronal progenitor factors, which are induced by SHH signals. This Rattus norvegicus (Rat) protein is Homeobox protein Nkx-6.1 (Nkx6-1).